The sequence spans 275 residues: Energy-coupling factor transporter ATP-binding protein EcfA1 (275 aa).

Positions 5–240 (IDVKNLSFRY…NDLDQIGLDD (236 aa)) constitute an ABC transporter domain. 40–47 (GHNGSGKS) provides a ligand contact to ATP.

It belongs to the ABC transporter superfamily. Energy-coupling factor EcfA family. As to quaternary structure, forms a stable energy-coupling factor (ECF) transporter complex composed of 2 membrane-embedded substrate-binding proteins (S component), 2 ATP-binding proteins (A component) and 2 transmembrane proteins (T component).

The protein localises to the cell membrane. Its function is as follows. ATP-binding (A) component of a common energy-coupling factor (ECF) ABC-transporter complex. Unlike classic ABC transporters this ECF transporter provides the energy necessary to transport a number of different substrates. The polypeptide is Energy-coupling factor transporter ATP-binding protein EcfA1 (Streptococcus pneumoniae serotype 4 (strain ATCC BAA-334 / TIGR4)).